Here is a 125-residue protein sequence, read N- to C-terminus: Histone H1-like protein Hc1 (125 aa).

Residues 98–125 are disordered; the sequence is TKAKVKPTKKAAPKTKVKTAKKTRSTKK. Residues 100-125 are compositionally biased toward basic residues; it reads AKVKPTKKAAPKTKVKTAKKTRSTKK.

This sequence belongs to the histone H1/H5 family. HCT subfamily.

Might have a role analogous to that of eukaryotic histone proteins. This is Histone H1-like protein Hc1 (hctA) from Chlamydia trachomatis serovar D (strain ATCC VR-885 / DSM 19411 / UW-3/Cx).